A 316-amino-acid polypeptide reads, in one-letter code: tRNA pseudouridine synthase B (316 aa).

The active-site Nucleophile is the Asp-38. Positions 238 to 312 (YPEVIVKSSA…PVCVLARQAG (75 aa)) constitute a PUA domain.

Belongs to the pseudouridine synthase TruB family. Type 1 subfamily.

The catalysed reaction is uridine(55) in tRNA = pseudouridine(55) in tRNA. In terms of biological role, responsible for synthesis of pseudouridine from uracil-55 in the psi GC loop of transfer RNAs. In Pelotomaculum thermopropionicum (strain DSM 13744 / JCM 10971 / SI), this protein is tRNA pseudouridine synthase B.